A 151-amino-acid polypeptide reads, in one-letter code: Large ribosomal subunit protein uL13 (151 aa).

This sequence belongs to the universal ribosomal protein uL13 family. Part of the 50S ribosomal subunit.

This protein is one of the early assembly proteins of the 50S ribosomal subunit, although it is not seen to bind rRNA by itself. It is important during the early stages of 50S assembly. This Synechococcus elongatus (strain ATCC 33912 / PCC 7942 / FACHB-805) (Anacystis nidulans R2) protein is Large ribosomal subunit protein uL13.